The following is a 185-amino-acid chain: Large ribosomal subunit protein eL19 (185 aa).

Residues 152–185 (SDKLTSQQEARRAKNTASRAKRNEKAQIVAKVDV) form a disordered region.

This sequence belongs to the eukaryotic ribosomal protein eL19 family.

In Tetrahymena thermophila (strain SB210), this protein is Large ribosomal subunit protein eL19 (RPL19).